Reading from the N-terminus, the 144-residue chain is ATP synthase subunit 9, mitochondrial (144 aa).

The transit peptide at 1 to 63 (MASTRVLASR…ATRQITQKRA (63 aa)) directs the protein to the mitochondrion. 2 consecutive transmembrane segments (helical) span residues 83-103 (TAAIGLTGAGIGIGLVFAALL) and 120-140 (AILGFAFVEAIGLFDLMVALM).

Belongs to the ATPase C chain family. F-type ATPases have 2 components, CF(1) - the catalytic core - and CF(0) - the membrane proton channel. CF(1) has five subunits: alpha(3), beta(3), gamma(1), delta(1), epsilon(1). CF(0) has three main subunits: a, b and c.

It localises to the mitochondrion membrane. Mitochondrial membrane ATP synthase (F(1)F(0) ATP synthase or Complex V) produces ATP from ADP in the presence of a proton gradient across the membrane which is generated by electron transport complexes of the respiratory chain. F-type ATPases consist of two structural domains, F(1) - containing the extramembraneous catalytic core and F(0) - containing the membrane proton channel, linked together by a central stalk and a peripheral stalk. During catalysis, ATP synthesis in the catalytic domain of F(1) is coupled via a rotary mechanism of the central stalk subunits to proton translocation. Part of the complex F(0) domain. A homomeric c-ring of probably 10 subunits is part of the complex rotary element. The polypeptide is ATP synthase subunit 9, mitochondrial (ATP9) (Podospora anserina (Pleurage anserina)).